A 343-amino-acid polypeptide reads, in one-letter code: Dihydroorotase (343 aa).

2 residues coordinate Zn(2+): H14 and H16. Substrate is bound by residues 16-18 and N42; that span reads HLR. K100, H137, and H175 together coordinate Zn(2+). Position 100 is an N6-carboxylysine (K100). Residue H137 participates in substrate binding. L220 contacts substrate. D248 contacts Zn(2+). Residue D248 is part of the active site. 2 residues coordinate substrate: H252 and A264.

The protein belongs to the metallo-dependent hydrolases superfamily. DHOase family. Class II DHOase subfamily. Homodimer. Zn(2+) serves as cofactor.

The enzyme catalyses (S)-dihydroorotate + H2O = N-carbamoyl-L-aspartate + H(+). It functions in the pathway pyrimidine metabolism; UMP biosynthesis via de novo pathway; (S)-dihydroorotate from bicarbonate: step 3/3. Functionally, catalyzes the reversible cyclization of carbamoyl aspartate to dihydroorotate. The chain is Dihydroorotase from Parasynechococcus marenigrum (strain WH8102).